The sequence spans 559 residues: NXPE family member 3 (559 aa).

The first 30 residues, 1-30 (MWINFVKLRLFCCLLAVLMVVVLVVNVTQV), serve as a signal peptide directing secretion. N-linked (GlcNAc...) asparagine glycans are attached at residues Asn-26, Asn-237, and Asn-346.

This sequence belongs to the NXPE family.

Its subcellular location is the secreted. The polypeptide is NXPE family member 3 (NXPE3) (Bos taurus (Bovine)).